Here is a 504-residue protein sequence, read N- to C-terminus: MLPSQAGAAAALGRGSALGGNLNRTPTGRPGGGGGTRGANGGRVPGNGAGLGQSRLEREAAAAAAPTAGALYSGSEGDSESGEEEELGAERRGLKRSLSEMELGVVVGGPEAAAAAAGGYGPVSGAVSGAKPGKKTRGRVKIKMEFIDNKLRRYTTFSKRKTGIMKKAYELSTLTGTQVLLLVASETGHVYTFATRKLQPMITSETGKALIQTCLNSPDSPPRSDPTTDQRMSATGFEEPDLTYQVSESDSSGETKDTLKPAFTVTNLPGTTSTIQTAPSTSTTMQVSSGPSFPITNYLAPVSASVSPSAVSSANGTVLKSTGSGPVSSGGLMQLPTSFTLMPGGAVAQQVPVQAIHVHQAPQQASPSRDSSTDLTQTSSSGTVTLPATIMTSSVPTTVGGHMMYPSPHAVMYAPTSGLADGSLTVLNAFSQAPSTMQVSHSQVQEPGGVPQVFLTAPSGTVQIPVSAVQLHQMAVIGQQAGSSSNLTELQVVNLDATHSTKSE.

Low complexity predominate over residues 1–28 (MLPSQAGAAAALGRGSALGGNLNRTPTG). The disordered stretch occupies residues 1–94 (MLPSQAGAAA…EELGAERRGL (94 aa)). The span at 29 to 51 (RPGGGGGTRGANGGRVPGNGAGL) shows a compositional bias: gly residues. Over residues 61-76 (AAAAAPTAGALYSGSE) the composition is skewed to low complexity. 5 positions are modified to phosphoserine: Ser-73, Ser-75, Ser-79, Ser-81, and Ser-99. Acidic residues predominate over residues 77–87 (GDSESGEEEEL). The DNA-binding element occupies 129–218 (GAKPGKKTRG…ALIQTCLNSP (90 aa)). Residues 137 to 197 (RGRVKIKMEF…GHVYTFATRK (61 aa)) form the MADS-box domain. Residues 164-218 (IMKKAYELSTLTGTQVLLLVASETGHVYTFATRKLQPMITSETGKALIQTCLNSP) are involved in dimerization. The interval 215–288 (LNSPDSPPRS…PSTSTTMQVS (74 aa)) is disordered. Phosphoserine is present on residues Ser-220 and Ser-249. Residues 264 to 288 (TVTNLPGTTSTIQTAPSTSTTMQVS) show a composition bias toward polar residues. 5 O-linked (GlcNAc) serine glycosylation sites follow: Ser-273, Ser-303, Ser-305, Ser-312, and Ser-379. The tract at residues 359–381 (HQAPQQASPSRDSSTDLTQTSSS) is disordered. Residues 368-381 (SRDSSTDLTQTSSS) are compositionally biased toward low complexity. Ser-431 and Ser-442 each carry phosphoserine; by dsDNA kinase.

As to quaternary structure, binds DNA as a multimer, probably a dimer. Interacts with MRTFA, forming the SRF-MRTFA nuclear complex which binds the 5'-CArG-3' consensus motif (CArG box) on DNA via SRF. Forms a nuclear ternary complex with MRTFA and SCAI. Interacts with MRTFB. Interacts with MLLT7/FOXO4, NKX3A and SSRP1. Interacts with ARID2. Interacts with SRFBP1. Interacts with FOXK1. Interacts with LPXN. Interacts with OLFM2; the interaction promotes dissociation of SRF from the transcriptional repressor HEY2, facilitates binding of SRF to target genes and promotes smooth muscle differentiation. Interacts with NKX3-1. Interacts with KAT5. Interacts with PURB. Post-translationally, phosphorylated by PRKDC.

It localises to the nucleus. SRF is a transcription factor that binds to the serum response element (SRE), a short sequence of dyad symmetry located 300 bp to the 5' of the site of transcription initiation of some genes (such as FOS). Together with MRTFA transcription coactivator, controls expression of genes regulating the cytoskeleton during development, morphogenesis and cell migration. The SRF-MRTFA complex activity responds to Rho GTPase-induced changes in cellular globular actin (G-actin) concentration, thereby coupling cytoskeletal gene expression to cytoskeletal dynamics. Required for cardiac differentiation and maturation. This chain is Serum response factor (Srf), found in Mus musculus (Mouse).